Here is a 491-residue protein sequence, read N- to C-terminus: Cobyric acid synthase (491 aa).

Residues glycine 251–phenylalanine 444 form the GATase cobBQ-type domain. Residue cysteine 329 is the Nucleophile of the active site. Residue histidine 436 is part of the active site.

Belongs to the CobB/CobQ family. CobQ subfamily.

It functions in the pathway cofactor biosynthesis; adenosylcobalamin biosynthesis. In terms of biological role, catalyzes amidations at positions B, D, E, and G on adenosylcobyrinic A,C-diamide. NH(2) groups are provided by glutamine, and one molecule of ATP is hydrogenolyzed for each amidation. The sequence is that of Cobyric acid synthase from Chloroflexus aggregans (strain MD-66 / DSM 9485).